The following is a 420-amino-acid chain: D-tagatose-1,6-bisphosphate aldolase subunit GatZ (420 aa).

The protein belongs to the GatZ/KbaZ family. GatZ subfamily. In terms of assembly, forms a complex with GatY.

It functions in the pathway carbohydrate metabolism; D-tagatose 6-phosphate degradation; D-glyceraldehyde 3-phosphate and glycerone phosphate from D-tagatose 6-phosphate: step 2/2. In terms of biological role, component of the tagatose-1,6-bisphosphate aldolase GatYZ that is required for full activity and stability of the Y subunit. Could have a chaperone-like function for the proper and stable folding of GatY. When expressed alone, GatZ does not show any aldolase activity. Is involved in the catabolism of galactitol. The chain is D-tagatose-1,6-bisphosphate aldolase subunit GatZ from Escherichia coli (strain SMS-3-5 / SECEC).